A 312-amino-acid polypeptide reads, in one-letter code: Beta-ketoacyl-[acyl-carrier-protein] synthase III (312 aa).

Active-site residues include Cys112 and His237. An ACP-binding region spans residues 238–242 (QANIR). Residue Asn267 is part of the active site.

It belongs to the thiolase-like superfamily. FabH family. In terms of assembly, homodimer.

It is found in the cytoplasm. It carries out the reaction malonyl-[ACP] + acetyl-CoA + H(+) = 3-oxobutanoyl-[ACP] + CO2 + CoA. Its pathway is lipid metabolism; fatty acid biosynthesis. Its function is as follows. Catalyzes the condensation reaction of fatty acid synthesis by the addition to an acyl acceptor of two carbons from malonyl-ACP. Catalyzes the first condensation reaction which initiates fatty acid synthesis and may therefore play a role in governing the total rate of fatty acid production. Possesses both acetoacetyl-ACP synthase and acetyl transacylase activities. Its substrate specificity determines the biosynthesis of branched-chain and/or straight-chain of fatty acids. In Listeria innocua serovar 6a (strain ATCC BAA-680 / CLIP 11262), this protein is Beta-ketoacyl-[acyl-carrier-protein] synthase III.